The chain runs to 119 residues: Protein Wnt-4 (119 aa).

S1 carries the O-palmitoleoyl serine; by PORCN lipid modification. Cystine bridges form between C69-C100 and C85-C95. An N-linked (GlcNAc...) asparagine glycan is attached at N86.

Belongs to the Wnt family. In terms of processing, palmitoleoylation is required for efficient binding to frizzled receptors. Depalmitoleoylation leads to Wnt signaling pathway inhibition.

It is found in the secreted. It localises to the extracellular space. The protein localises to the extracellular matrix. Ligand for members of the frizzled family of seven transmembrane receptors. Plays an important role in embryonic development. This Meleagris gallopavo (Wild turkey) protein is Protein Wnt-4 (WNT4).